Here is a 149-residue protein sequence, read N- to C-terminus: Large ribosomal subunit protein bL9 (149 aa).

Belongs to the bacterial ribosomal protein bL9 family.

Its function is as follows. Binds to the 23S rRNA. The polypeptide is Large ribosomal subunit protein bL9 (Thiobacillus denitrificans (strain ATCC 25259 / T1)).